The primary structure comprises 286 residues: 4-hydroxybenzoate octaprenyltransferase (286 aa).

The next 7 helical transmembrane spans lie at 21-40, 95-115, 142-162, 167-187, 211-231, 235-255, and 266-286; these read GTLL…AGGM, ILFV…NGLV, FLGV…TGEV, WWLF…YAMV, IIGL…WSAE, LYGL…MLIF, and FLNN…DYLI.

Belongs to the UbiA prenyltransferase family. Requires Mg(2+) as cofactor.

It is found in the cell inner membrane. The enzyme catalyses all-trans-octaprenyl diphosphate + 4-hydroxybenzoate = 4-hydroxy-3-(all-trans-octaprenyl)benzoate + diphosphate. It participates in cofactor biosynthesis; ubiquinone biosynthesis. In terms of biological role, catalyzes the prenylation of para-hydroxybenzoate (PHB) with an all-trans polyprenyl group. Mediates the second step in the final reaction sequence of ubiquinone-8 (UQ-8) biosynthesis, which is the condensation of the polyisoprenoid side chain with PHB, generating the first membrane-bound Q intermediate 3-octaprenyl-4-hydroxybenzoate. This is 4-hydroxybenzoate octaprenyltransferase from Shewanella putrefaciens (strain CN-32 / ATCC BAA-453).